Reading from the N-terminus, the 100-residue chain is Large ribosomal subunit protein uL23 (100 aa).

This sequence belongs to the universal ribosomal protein uL23 family. In terms of assembly, part of the 50S ribosomal subunit. Contacts protein L29, and trigger factor when it is bound to the ribosome.

Functionally, one of the early assembly proteins it binds 23S rRNA. One of the proteins that surrounds the polypeptide exit tunnel on the outside of the ribosome. Forms the main docking site for trigger factor binding to the ribosome. This Escherichia coli O157:H7 protein is Large ribosomal subunit protein uL23.